We begin with the raw amino-acid sequence, 104 residues long: MKNPFEAMKQLKKLQEKMAKIEEELEQTLVEGTAGGGVVKIIMNAKEEIKEVKIDPEVVNKDEVDILEDLIAAALRDALTKAKEKSAEKMGSLADGLPLPPGLF.

A disordered region spans residues 85 to 104 (KSAEKMGSLADGLPLPPGLF).

Belongs to the YbaB/EbfC family. As to quaternary structure, homodimer.

Its subcellular location is the cytoplasm. The protein resides in the nucleoid. Functionally, binds to DNA and alters its conformation. May be involved in regulation of gene expression, nucleoid organization and DNA protection. This chain is Nucleoid-associated protein DICTH_1981, found in Dictyoglomus thermophilum (strain ATCC 35947 / DSM 3960 / H-6-12).